Consider the following 138-residue polypeptide: PilB-specific inhibitory protein CpiA (138 aa).

In terms of assembly, interacts with PilB but not with TfpB.

Functionally, acts as a PilB inhibitor to control natural transformation. Inhibits type IV pili (T4P) extension by specifically binding and inhibiting the pilus extension ATPase PilB but not TfpB. This activity probably modulates T4P extension under different environmental conditions. This is PilB-specific inhibitory protein CpiA from Acinetobacter baylyi (strain ATCC 33305 / BD413 / ADP1).